Consider the following 390-residue polypeptide: GTPase Obg (390 aa).

An Obg domain is found at 1 to 159; the sequence is MKFVDEASIL…RELLLELMLL (159 aa). Positions 127-147 are disordered; the sequence is NTRFKSSVNRTPRQKTNGTPG. The segment covering 129–145 has biased composition (polar residues); it reads RFKSSVNRTPRQKTNGT. The OBG-type G domain maps to 160-333; the sequence is ADVGMLGMPN…LCWDVMTFII (174 aa). GTP is bound by residues 166 to 173, 191 to 195, 213 to 216, 283 to 286, and 314 to 316; these read GMPNAGKS, FTTLV, DIPG, NKID, and SAA. Mg(2+) contacts are provided by Ser-173 and Thr-193.

It belongs to the TRAFAC class OBG-HflX-like GTPase superfamily. OBG GTPase family. Monomer. Requires Mg(2+) as cofactor.

It localises to the cytoplasm. An essential GTPase which binds GTP, GDP and possibly (p)ppGpp with moderate affinity, with high nucleotide exchange rates and a fairly low GTP hydrolysis rate. Plays a role in control of the cell cycle, stress response, ribosome biogenesis and in those bacteria that undergo differentiation, in morphogenesis control. This chain is GTPase Obg, found in Escherichia coli O157:H7.